Consider the following 310-residue polypeptide: Collagen-like protein V6 (310 aa).

Residues 1–41 (MSLSTLFSPNTYNINSKSQTLNNLPSNPTSQTNTLWSNNAY) show a composition bias toward polar residues. Residues 1–183 (MSLSTLFSPN…GDPGAKGDPG (183 aa)) are disordered. Collagen-like domains follow at residues 61 to 119 (GQKG…KGQA) and 123 to 182 (GLKG…KGDP). Basic and acidic residues predominate over residues 92 to 101 (SGDKGDKGDS). 2 N-linked (GlcNAc...) asparagine; by host glycosylation sites follow: Asn-227 and Asn-264.

Belongs to the sputnik virus V6 family.

This Sputnik virophage protein is Collagen-like protein V6.